We begin with the raw amino-acid sequence, 430 residues long: Asparagine--tRNA ligase (430 aa).

Belongs to the class-II aminoacyl-tRNA synthetase family. Homodimer.

It is found in the cytoplasm. It carries out the reaction tRNA(Asn) + L-asparagine + ATP = L-asparaginyl-tRNA(Asn) + AMP + diphosphate + H(+). This is Asparagine--tRNA ligase from Listeria monocytogenes serotype 4b (strain F2365).